Here is a 62-residue protein sequence, read N- to C-terminus: ATP synthase subunit epsilon, mitochondrial (62 aa).

Threonine 52 carries the post-translational modification Phosphothreonine.

This sequence belongs to the eukaryotic ATPase epsilon family. In terms of assembly, F-type ATPases have 2 components, CF(1) - the catalytic core - and CF(0) - the membrane proton channel. CF(1) has five subunits: alpha(3), beta(3), gamma(1), delta(1), epsilon(1). CF(0) has three main subunits: a, b and c.

Its subcellular location is the mitochondrion. It is found in the mitochondrion inner membrane. In terms of biological role, mitochondrial membrane ATP synthase (F(1)F(0) ATP synthase or Complex V) produces ATP from ADP in the presence of a proton gradient across the membrane which is generated by electron transport complexes of the respiratory chain. F-type ATPases consist of two structural domains, F(1) - containing the extramembraneous catalytic core, and F(0) - containing the membrane proton channel, linked together by a central stalk and a peripheral stalk. During catalysis, ATP synthesis in the catalytic domain of F(1) is coupled via a rotary mechanism of the central stalk subunits to proton translocation. Part of the complex F(1) domain and of the central stalk which is part of the complex rotary element. Rotation of the central stalk against the surrounding alpha(3)beta(3) subunits leads to hydrolysis of ATP in three separate catalytic sites on the beta subunits. In Saccharomyces cerevisiae (strain ATCC 204508 / S288c) (Baker's yeast), this protein is ATP synthase subunit epsilon, mitochondrial (ATP15).